We begin with the raw amino-acid sequence, 387 residues long: 4-hydroxy-3-methylbut-2-en-1-yl diphosphate synthase (flavodoxin) (387 aa).

4 residues coordinate [4Fe-4S] cluster: C280, C283, C315, and E322.

The protein belongs to the IspG family. The cofactor is [4Fe-4S] cluster.

The catalysed reaction is (2E)-4-hydroxy-3-methylbut-2-enyl diphosphate + oxidized [flavodoxin] + H2O + 2 H(+) = 2-C-methyl-D-erythritol 2,4-cyclic diphosphate + reduced [flavodoxin]. It participates in isoprenoid biosynthesis; isopentenyl diphosphate biosynthesis via DXP pathway; isopentenyl diphosphate from 1-deoxy-D-xylulose 5-phosphate: step 5/6. In terms of biological role, converts 2C-methyl-D-erythritol 2,4-cyclodiphosphate (ME-2,4cPP) into 1-hydroxy-2-methyl-2-(E)-butenyl 4-diphosphate. This is 4-hydroxy-3-methylbut-2-en-1-yl diphosphate synthase (flavodoxin) from Mycobacterium bovis (strain BCG / Pasteur 1173P2).